The following is a 589-amino-acid chain: Aspartate--tRNA ligase (589 aa).

Glutamate 174 contributes to the L-aspartate binding site. An aspartate region spans residues 198–201; sequence QLFK. Residue arginine 220 participates in L-aspartate binding. ATP-binding positions include 220–222 and glutamine 229; that span reads RDE. Histidine 448 is a binding site for L-aspartate. Glutamate 484 lines the ATP pocket. L-aspartate is bound at residue arginine 491. 536 to 539 is an ATP binding site; that stretch reads GLDR.

Belongs to the class-II aminoacyl-tRNA synthetase family. Type 1 subfamily. Homodimer.

It localises to the cytoplasm. It catalyses the reaction tRNA(Asp) + L-aspartate + ATP = L-aspartyl-tRNA(Asp) + AMP + diphosphate. In terms of biological role, catalyzes the attachment of L-aspartate to tRNA(Asp) in a two-step reaction: L-aspartate is first activated by ATP to form Asp-AMP and then transferred to the acceptor end of tRNA(Asp). The polypeptide is Aspartate--tRNA ligase (Leuconostoc citreum (strain KM20)).